A 125-amino-acid polypeptide reads, in one-letter code: 13 kDa ribonucleoprotein-associated protein (125 aa).

It belongs to the eukaryotic ribosomal protein eL8 family. Component of the U3 snoRNP particle. Binds to the C'/D and B/C motifs in U3 snoRNA. Component of the 25S U4/U6.U5 tri-snRNP particle, a subcomplex of the spliceosome. Binds to the 5' stem-loop of U4 snRNA.

It is found in the nucleus. It localises to the nucleolus. Common component of the spliceosome and rRNA processing machinery. In association with the spliceosomal U4/U6.U5 tri-snRNP particle, required for splicing of pre-mRNA. In association with box C/D snoRNPs, required for processing of pre-ribosomal RNA (rRNA) and site-specific 2'-O-methylation of substrate RNAs. Essential for the accumulation and stability of U4 snRNA, U6 snRNA, and box C/D snoRNAs. The chain is 13 kDa ribonucleoprotein-associated protein (snu13) from Schizosaccharomyces pombe (strain 972 / ATCC 24843) (Fission yeast).